Here is a 571-residue protein sequence, read N- to C-terminus: FAD-linked oxidoreductase patO (571 aa).

The signal sequence occupies residues 1 to 23 (MRLHQSPPRLLVCILSVLQVSAG). N-linked (GlcNAc...) asparagine glycans are attached at residues Asn47, Asn101, Asn125, Asn179, Asn341, Asn374, Asn380, Asn421, Asn445, and Asn480. The 180-residue stretch at 115-294 (TLGAMVRYAV…YAVTVKTFPD (180 aa)) folds into the FAD-binding PCMH-type domain.

It belongs to the oxygen-dependent FAD-linked oxidoreductase family. FAD is required as a cofactor.

It is found in the vacuole lumen. The protein operates within mycotoxin biosynthesis; patulin biosynthesis. In terms of biological role, FAD-linked oxidoreductase; part of the gene cluster that mediates the biosynthesis of patulin, an acetate-derived tetraketide mycotoxin produced by several fungal species that shows antimicrobial properties against several bacteria. PatO acts with patJ in the vacuole to convert gentisyl alcohol to isoepoxydon. The pathway begins with the synthesis of 6-methylsalicylic acid by the polyketide synthase (PKS) patK via condensation of acetate and malonate units. The 6-methylsalicylic acid decarboxylase patG then catalyzes the decarboxylation of 6-methylsalicylic acid to yield m-cresol (also known as 3-methylphenol). These first reactions occur in the cytosol. The intermediate m-cresol is then transported into the endoplasmic reticulum where the cytochrome P450 monooxygenase patH converts it to m-hydroxybenzyl alcohol, which is further converted to gentisyl alcohol by the cytochrome P450 monooxygenase patI. The oxidoreductases patJ and patO further convert gentisyl alcohol to isoepoxydon in the vacuole. PatN catalyzes then the transformation of isoepoxydon into phyllostine. The cluster protein patF is responsible for the conversion from phyllostine to neopatulin whereas the alcohol dehydrogenase patD converts neopatulin to E-ascladiol. The steps between isoepoxydon and E-ascladiol occur in the cytosol, and E-ascladiol is probably secreted to the extracellular space by one of the cluster-specific transporters patC or patM. Finally, the secreted patulin synthase patE catalyzes the conversion of E-ascladiol to patulin. In Penicillium expansum (Blue mold rot fungus), this protein is FAD-linked oxidoreductase patO.